The following is a 369-amino-acid chain: Glycolate oxidase 1 (369 aa).

The FMN hydroxy acid dehydrogenase domain maps to 1–360; it reads MGEITNVMEY…TRKHIITESD (360 aa). Position 25 (Tyr-25) interacts with glyoxylate. FMN contacts are provided by residues 78 to 80, Ser-107, 128 to 130, and Thr-156; these read PTA and QLY. A glyoxylate-binding site is contributed by Tyr-130. Arg-165 lines the glyoxylate pocket. FMN-binding residues include Lys-231 and Ser-253. The glyoxylate site is built by His-255 and Arg-258. Residue His-255 is the Proton acceptor of the active site. FMN contacts are provided by residues 286-290 and 309-310; these read DGGVR and GR.

It belongs to the FMN-dependent alpha-hydroxy acid dehydrogenase family. In terms of assembly, homotetramer. It depends on FMN as a cofactor.

It is found in the peroxisome. It catalyses the reaction glycolate + O2 = glyoxylate + H2O2. Its pathway is photosynthesis; photorespiration; glycine from 2-phosphoglycolate: step 2/3. In terms of biological role, catalyzes the oxidation of glycolate to glyoxylate, with a reduction of O2 to H2O2. Is an essential enzyme in photorespiration in plants. Photorespiration plays a vital role in C4 photosynthesis in Z.mays and is essential for maize seedling development and maintaining low (non-toxic) levels of glycolate. The sequence is that of Glycolate oxidase 1 from Zea mays (Maize).